Here is a 247-residue protein sequence, read N- to C-terminus: Peptidyl-prolyl cis-trans isomerase FKBP17-2, chloroplastic (247 aa).

Residues 1–79 (MANLFTATAP…SSLTRRFGIG (79 aa)) constitute a chloroplast transit peptide. Residues 26-64 (QCYASSSNPPEPESSSPPPPPPPPQPLASQQKRKKNVET) form a disordered region. Over residues 34 to 51 (PPEPESSSPPPPPPPPQP) the composition is skewed to pro residues. Positions 141-243 (GDLVVIDLKG…EYIVEIDRVS (103 aa)) constitute a PPIase FKBP-type domain.

The protein belongs to the FKBP-type PPIase family.

Its subcellular location is the plastid. It localises to the chloroplast thylakoid lumen. It carries out the reaction [protein]-peptidylproline (omega=180) = [protein]-peptidylproline (omega=0). Functionally, PPIases accelerate the folding of proteins. It catalyzes the cis-trans isomerization of proline imidic peptide bonds in oligopeptides. In Arabidopsis thaliana (Mouse-ear cress), this protein is Peptidyl-prolyl cis-trans isomerase FKBP17-2, chloroplastic (FKBP17-2).